Here is a 505-residue protein sequence, read N- to C-terminus: 2-isopropylmalate synthase (505 aa).

The region spanning 5-267 (VYIFDTTLRD…YTNIKTEEIY (263 aa)) is the Pyruvate carboxyltransferase domain. 4 residues coordinate Mn(2+): aspartate 14, histidine 202, histidine 204, and asparagine 238. A regulatory domain region spans residues 391–505 (TLEYLHISSG…VNKLIWDSQK (115 aa)).

It belongs to the alpha-IPM synthase/homocitrate synthase family. LeuA type 1 subfamily. As to quaternary structure, homodimer. Mn(2+) serves as cofactor.

It is found in the cytoplasm. It catalyses the reaction 3-methyl-2-oxobutanoate + acetyl-CoA + H2O = (2S)-2-isopropylmalate + CoA + H(+). Its pathway is amino-acid biosynthesis; L-leucine biosynthesis; L-leucine from 3-methyl-2-oxobutanoate: step 1/4. Its function is as follows. Catalyzes the condensation of the acetyl group of acetyl-CoA with 3-methyl-2-oxobutanoate (2-ketoisovalerate) to form 3-carboxy-3-hydroxy-4-methylpentanoate (2-isopropylmalate). The polypeptide is 2-isopropylmalate synthase (Pelotomaculum thermopropionicum (strain DSM 13744 / JCM 10971 / SI)).